Here is a 206-residue protein sequence, read N- to C-terminus: Ribosomal RNA large subunit methyltransferase E (206 aa).

S-adenosyl-L-methionine is bound by residues G60, W62, D80, D96, and D121. The active-site Proton acceptor is the K161.

This sequence belongs to the class I-like SAM-binding methyltransferase superfamily. RNA methyltransferase RlmE family.

The protein resides in the cytoplasm. The catalysed reaction is uridine(2552) in 23S rRNA + S-adenosyl-L-methionine = 2'-O-methyluridine(2552) in 23S rRNA + S-adenosyl-L-homocysteine + H(+). Its function is as follows. Specifically methylates the uridine in position 2552 of 23S rRNA at the 2'-O position of the ribose in the fully assembled 50S ribosomal subunit. In Hahella chejuensis (strain KCTC 2396), this protein is Ribosomal RNA large subunit methyltransferase E.